The sequence spans 111 residues: UPF0339 protein BP0521 (111 aa).

Repeat copies occupy residues 9–57 and 60–108. Residues 86-111 form a disordered region; it reads TQARDNGIASVKSNAPGAPTKDQTQA.

This sequence belongs to the UPF0339 family. Duplicated subfamily.

The protein is UPF0339 protein BP0521 of Bordetella pertussis (strain Tohama I / ATCC BAA-589 / NCTC 13251).